The chain runs to 158 residues: NAD(P)H-quinone oxidoreductase subunit J, chloroplastic (158 aa).

Belongs to the complex I 30 kDa subunit family. In terms of assembly, NDH is composed of at least 16 different subunits, 5 of which are encoded in the nucleus.

It is found in the plastid. It localises to the chloroplast thylakoid membrane. The enzyme catalyses a plastoquinone + NADH + (n+1) H(+)(in) = a plastoquinol + NAD(+) + n H(+)(out). It catalyses the reaction a plastoquinone + NADPH + (n+1) H(+)(in) = a plastoquinol + NADP(+) + n H(+)(out). NDH shuttles electrons from NAD(P)H:plastoquinone, via FMN and iron-sulfur (Fe-S) centers, to quinones in the photosynthetic chain and possibly in a chloroplast respiratory chain. The immediate electron acceptor for the enzyme in this species is believed to be plastoquinone. Couples the redox reaction to proton translocation, and thus conserves the redox energy in a proton gradient. This Nicotiana tabacum (Common tobacco) protein is NAD(P)H-quinone oxidoreductase subunit J, chloroplastic.